The primary structure comprises 226 residues: MSETAPAETATPAPVEKSPAKKKATKKAAGAGAAKRKATGPPVSELITKAVAASKERNGLSLAALKKALAAGGYDVEKNNSRIKLGLKSLVSKGTLVQTKGTGASGSFKLNKKAASGEAKPKAKKAGAAKAKKPAGATPKKAKKAAGAKKAVKKTPKKAKKPAAAGVKKVAKSPKKAKAAAKPKKATKSPAKPKAVKPKAAKPKAAKPKAAKPKAAKAKKAAAKKK.

Residues 1–16 (MSETAPAETATPAPVE) show a composition bias toward low complexity. Residues 1-44 (MSETAPAETATPAPVEKSPAKKKATKKAAGAGAAKRKATGPPVS) are disordered. N-acetylserine; partial is present on S2. Position 2 is a phosphoserine (S2). T11 is subject to Phosphothreonine; by GSK3. At K17 the chain carries N6-acetyllysine. S18 is subject to Phosphoserine. At K27 the chain carries N6-methyllysine. K37 bears the N6-(beta-hydroxybutyryl)lysine; alternate mark. K37 bears the N6-succinyllysine; alternate mark. T39 bears the Phosphothreonine mark. An H15 domain is found at 39–112 (TGPPVSELIT…GASGSFKLNK (74 aa)). K49 is subject to N6-acetyllysine. K55 carries the post-translational modification N6-(beta-hydroxybutyryl)lysine. A Citrulline modification is found at R57. K67 is subject to N6-(beta-hydroxybutyryl)lysine. K78 carries the post-translational modification N6-acetyllysine. N6-(beta-hydroxybutyryl)lysine occurs at positions 88, 93, and 109. A disordered region spans residues 98 to 226 (QTKGTGASGS…KAKKAAAKKK (129 aa)). The span at 122-133 (KAKKAGAAKAKK) shows a compositional bias: basic residues. T138 and T155 each carry phosphothreonine. Basic residues predominate over residues 140-161 (KKAKKAAGAKKAVKKTPKKAKK). Residue K168 is modified to N6-acetyllysine. The segment covering 169 to 187 (KVAKSPKKAKAAAKPKKAT) has biased composition (basic residues). S173 and S189 each carry phosphoserine. Residues 194-226 (KAVKPKAAKPKAAKPKAAKPKAAKAKKAAAKKK) show a composition bias toward basic residues.

The protein belongs to the histone H1/H5 family. In terms of assembly, interacts with MSX1. H1 histones are progressively phosphorylated during the cell cycle, becoming maximally phosphorylated during late G2 phase and M phase, and being dephosphorylated sharply thereafter. Phosphorylated at Thr-11 by GSK3B during mitosis in prometaphase and dephosphorylated in telophase. In terms of processing, citrullination at Arg-57 (H1R54ci) by PADI4 takes place within the DNA-binding site of H1 and results in its displacement from chromatin and global chromatin decondensation, thereby promoting pluripotency and stem cell maintenance. As to expression, ubiquitous. Expressed in the majority of the cell lines tested and in testis.

The protein resides in the nucleus. It is found in the chromosome. Functionally, histone H1 protein binds to linker DNA between nucleosomes forming the macromolecular structure known as the chromatin fiber. Histones H1 are necessary for the condensation of nucleosome chains into higher-order structured fibers. Also acts as a regulator of individual gene transcription through chromatin remodeling, nucleosome spacing and DNA methylation. The sequence is that of Histone H1.5 from Homo sapiens (Human).